Here is a 314-residue protein sequence, read N- to C-terminus: Homoserine O-acetyltransferase (314 aa).

The active-site Acyl-thioester intermediate is Cys142. Positions 163 and 192 each coordinate substrate. Catalysis depends on His235, which acts as the Proton acceptor. Residue Glu237 is part of the active site. Arg249 serves as a coordination point for substrate.

This sequence belongs to the MetA family.

Its subcellular location is the cytoplasm. The enzyme catalyses L-homoserine + acetyl-CoA = O-acetyl-L-homoserine + CoA. It functions in the pathway amino-acid biosynthesis; L-methionine biosynthesis via de novo pathway; O-acetyl-L-homoserine from L-homoserine: step 1/1. Functionally, transfers an acetyl group from acetyl-CoA to L-homoserine, forming acetyl-L-homoserine. This is Homoserine O-acetyltransferase from Streptococcus thermophilus (strain ATCC BAA-250 / LMG 18311).